The following is a 441-amino-acid chain: Keratin, type I cytoskeletal 17 (441 aa).

The segment at 1–23 (MTTTIRHFSSGSIKGSSGLAGGS) is disordered. Residues 1–91 (MTTTIRHFSS…GGVDGLLVGG (91 aa)) are head. Residues 9–23 (SSGSIKGSSGLAGGS) show a composition bias toward low complexity. A Phosphoserine modification is found at Ser12. Lys14 is covalently cross-linked (Glycyl lysine isopeptide (Lys-Gly) (interchain with G-Cter in SUMO1); alternate). Residue Lys14 forms a Glycyl lysine isopeptide (Lys-Gly) (interchain with G-Cter in SUMO2); alternate linkage. Ser24, Ser30, Ser32, and Ser37 each carry phosphoserine. Ser42 is modified (phosphoserine; by RPS6KA1). The tract at residues 92–128 (EKATMQNLNDRLASYLDKVRALEEANTELELKIRDWY) is coil 1A. The 312-residue stretch at 92–403 (EKATMQNLND…RLLEGEDAHL (312 aa)) folds into the IF rod domain. Thr118 is modified (phosphothreonine). Residues 129–146 (QKQAPGPAPDYSSYFKTI) are linker 1. The segment at 147–238 (EDLRNKIHTA…NHEEEMKALR (92 aa)) is coil 1B. Residues 239-258 (GQVGGEINVEMDAAPGVDLS) form a linker 12 region. The tract at residues 259–400 (RILNEMRDQY…TYRRLLEGED (142 aa)) is coil 2. A Glycyl lysine isopeptide (Lys-Gly) (interchain with G-Cter in SUMO2) cross-link involves residue Lys286. Thr287 is subject to Phosphothreonine. A Phosphoserine modification is found at Ser331. The tract at residues 401 to 441 (AHLTQYKTKEPVTTRQVRTIVEEVQDGRVISSREQVHQTSH) is tail. Residues Lys407 and Lys409 each participate in a glycyl lysine isopeptide (Lys-Gly) (interchain with G-Cter in SUMO1); alternate cross-link. Residues Lys407 and Lys409 each participate in a glycyl lysine isopeptide (Lys-Gly) (interchain with G-Cter in SUMO2); alternate cross-link.

It belongs to the intermediate filament family. As to quaternary structure, heterodimer of a type I and a type II keratin. KRT17 associates with KRT6 isomers (KRT6A or KRT6B). Interacts with TRADD and SFN. Post-translationally, phosphorylation at Ser-42 occurs in a growth- and stress-dependent fashion in skin keratinocytes, it has no effect on filament organization.

The protein resides in the cytoplasm. In terms of biological role, type I keratin involved in the formation and maintenance of various skin appendages, specifically in determining shape and orientation of hair. Required for the correct growth of hair follicles, in particular for the persistence of the anagen (growth) state. Modulates the function of TNF-alpha in the specific context of hair cycling. Regulates protein synthesis and epithelial cell growth through binding to the adapter protein SFN and by stimulating Akt/mTOR pathway. Involved in tissue repair. May be a marker of basal cell differentiation in complex epithelia and therefore indicative of a certain type of epithelial 'stem cells'. Acts as a promoter of epithelial proliferation by acting a regulator of immune response in skin: promotes Th1/Th17-dominated immune environment contributing to the development of basaloid skin tumors. May act as an autoantigen in the immunopathogenesis of psoriasis, with certain peptide regions being a major target for autoreactive T-cells and hence causing their proliferation. The chain is Keratin, type I cytoskeletal 17 from Bos taurus (Bovine).